Reading from the N-terminus, the 331-residue chain is Beta-ketoacyl-[acyl-carrier-protein] synthase III (331 aa).

Residues Cys115 and His255 contribute to the active site. Residues 256 to 260 (QANFR) are ACP-binding. Residue Asn285 is part of the active site.

It belongs to the thiolase-like superfamily. FabH family. As to quaternary structure, homodimer.

The protein localises to the cytoplasm. The catalysed reaction is malonyl-[ACP] + acetyl-CoA + H(+) = 3-oxobutanoyl-[ACP] + CO2 + CoA. Its pathway is lipid metabolism; fatty acid biosynthesis. In terms of biological role, catalyzes the condensation reaction of fatty acid synthesis by the addition to an acyl acceptor of two carbons from malonyl-ACP. Catalyzes the first condensation reaction which initiates fatty acid synthesis and may therefore play a role in governing the total rate of fatty acid production. Possesses both acetoacetyl-ACP synthase and acetyl transacylase activities. Its substrate specificity determines the biosynthesis of branched-chain and/or straight-chain of fatty acids. The protein is Beta-ketoacyl-[acyl-carrier-protein] synthase III of Helicobacter pylori (strain J99 / ATCC 700824) (Campylobacter pylori J99).